We begin with the raw amino-acid sequence, 273 residues long: Transcriptional regulator ICP22 homolog (273 aa).

2 disordered regions span residues 1 to 57 (GSCR…YGLP) and 160 to 273 (YEQR…SARR). Positions 11–33 (PSTSPIIPSLSPSSGGNPSPRSS) are enriched in low complexity. Composition is skewed to acidic residues over residues 178–194 (EECEVSGDESPSEEEEA) and 204–224 (SPEEESASSDFESFSDEEDDS). The span at 261-273 (VPKGGRPAKSARR) shows a compositional bias: low complexity.

This sequence belongs to the herpesviridae ICP22 family.

The sequence is that of Transcriptional regulator ICP22 homolog from Equus caballus (Horse).